Consider the following 354-residue polypeptide: MAYQYHNDLLAPYLALSQGDKVQAEYVWIDGDGGLRSKTMTMTKKTTDIGQLRIWDFDGSSTNQAPGGDSDVYLRPAAIFKDPFRGGDNILVLAETFNNDGTPNRTNHRHHTKKVMDLAKDSVPWFGLEQEYTLFDADGTPFGWPKGGFPGPQGPYYCGAGTGKVFARDLIEAHYRACLYAGVNISGINAEVMPSQWEFQVGPCEGISMGDHLWMARYLLVRIAEQWGIKVSFHPKPLAGDWNGAGCHTNYSTKVMREPGGMKYIDEAIEKLSKRHAEHIAVYGEDNDLRLTGRHETGHIGDFSSGVANRGASIRVPRHVAAQGYGYLEDRRPASNIDPYRVTGIIVETTVLDK.

In terms of domain architecture, GS beta-grasp spans 22–101 (VQAEYVWIDG…VLAETFNNDG (80 aa)). The 247-residue stretch at 108–354 (HRHHTKKVMD…IIVETTVLDK (247 aa)) folds into the GS catalytic domain.

This sequence belongs to the glutamine synthetase family. Homooctamer.

The protein resides in the cytoplasm. It carries out the reaction L-glutamate + NH4(+) + ATP = L-glutamine + ADP + phosphate + H(+). The polypeptide is Glutamine synthetase (GLNA) (Suillus bovinus (Jersey cow bolete)).